Consider the following 390-residue polypeptide: GTPase Obg (390 aa).

An Obg domain is found at Met-1 to Leu-159. The disordered stretch occupies residues Asn-127–Gly-147. Residues Arg-129 to Thr-145 show a composition bias toward polar residues. Residues Ala-160–Ile-333 form the OBG-type G domain. GTP is bound by residues Gly-166–Ser-173, Phe-191–Val-195, Asp-213–Gly-216, Asn-283–Asp-286, and Ser-314–Ala-316. Positions 173 and 193 each coordinate Mg(2+).

Belongs to the TRAFAC class OBG-HflX-like GTPase superfamily. OBG GTPase family. As to quaternary structure, monomer. Mg(2+) serves as cofactor.

Its subcellular location is the cytoplasm. In terms of biological role, an essential GTPase which binds GTP, GDP and possibly (p)ppGpp with moderate affinity, with high nucleotide exchange rates and a fairly low GTP hydrolysis rate. Plays a role in control of the cell cycle, stress response, ribosome biogenesis and in those bacteria that undergo differentiation, in morphogenesis control. This Escherichia fergusonii (strain ATCC 35469 / DSM 13698 / CCUG 18766 / IAM 14443 / JCM 21226 / LMG 7866 / NBRC 102419 / NCTC 12128 / CDC 0568-73) protein is GTPase Obg.